The sequence spans 364 residues: Chorismate synthase (364 aa).

A disordered region spans residues 41–60 (MQHDLDRRRPGTSRYTTARR). NADP(+) contacts are provided by Arg-48 and Arg-54. Residues 125 to 127 (RSS), 238 to 239 (NA), Gly-278, 293 to 297 (KPTSS), and Arg-319 each bind FMN.

This sequence belongs to the chorismate synthase family. In terms of assembly, homotetramer. It depends on FMNH2 as a cofactor.

It carries out the reaction 5-O-(1-carboxyvinyl)-3-phosphoshikimate = chorismate + phosphate. It functions in the pathway metabolic intermediate biosynthesis; chorismate biosynthesis; chorismate from D-erythrose 4-phosphate and phosphoenolpyruvate: step 7/7. Functionally, catalyzes the anti-1,4-elimination of the C-3 phosphate and the C-6 proR hydrogen from 5-enolpyruvylshikimate-3-phosphate (EPSP) to yield chorismate, which is the branch point compound that serves as the starting substrate for the three terminal pathways of aromatic amino acid biosynthesis. This reaction introduces a second double bond into the aromatic ring system. This is Chorismate synthase from Shewanella putrefaciens (strain CN-32 / ATCC BAA-453).